The primary structure comprises 926 residues: Glycogenin (926 aa).

UDP contacts are provided by L10, T12, Y16, and R85. 13 residues coordinate UDP-alpha-D-glucose: L10, T12, Y16, R85, K94, D111, A112, D113, N145, S146, D184, D187, and Q188. Positions 111, 112, and 113 each coordinate UDP. D111 contributes to the Mn(2+) binding site. Mn(2+) is bound at residue D113. Residue Y219 is glycosylated (O-linked (Glc...) tyrosine). Residues H236, G239, and K242 each contribute to the UDP site. Residue H236 participates in Mn(2+) binding. Residues G239 and K242 each coordinate UDP-alpha-D-glucose. 5 disordered regions span residues 379–432, 452–476, 547–584, 611–749, and 768–903; these read PSVS…PEMS, YYAH…LPKE, SIQN…PPRH, MSGK…ETVQ, and LPHA…PNTD. A compositionally biased stretch (pro residues) spans 386-402; sequence LTPPPADAAPAPAPAPV. Positions 404-413 are enriched in polar residues; it reads TQTEQKTAQP. A compositionally biased stretch (basic and acidic residues) spans 456 to 469; that stretch reads PESHRPATEHKEPE. Over residues 557 to 566 the composition is skewed to low complexity; it reads AHSQHQSHAT. Over residues 655-683 the composition is skewed to polar residues; sequence SLHSLQSVPGTPRTQYSTFGKSPRLTNAR. Residues 692 to 704 show a composition bias toward acidic residues; that stretch reads EQPEDSADGDDEN. Positions 733-745 are enriched in basic and acidic residues; that stretch reads DRWAQTDRVKTVD. The span at 788–798 shows a compositional bias: gly residues; the sequence is SGNGRAGGGGQ. Residues 800-812 show a composition bias toward polar residues; it reads EAQTQHQSTYYEY. Low complexity-rich tracts occupy residues 813 to 824 and 851 to 875; these read QQQHPHSQQSRQ and HAQG…NPNL.

The protein belongs to the glycosyltransferase 8 family. Glycogenin subfamily. Requires Mn(2+) as cofactor.

It localises to the cytoplasm. It is found in the vacuole. The enzyme catalyses L-tyrosyl-[glycogenin] + UDP-alpha-D-glucose = alpha-D-glucosyl-L-tyrosyl-[glycogenin] + UDP + H(+). It carries out the reaction [1,4-alpha-D-glucosyl](n)-L-tyrosyl-[glycogenin] + UDP-alpha-D-glucose = [1,4-alpha-D-glucosyl](n+1)-L-tyrosyl-[glycogenin] + UDP + H(+). Its function is as follows. Self-glucosylating initiator of glycogen synthesis. It catalyzes the formation of a short alpha (1,4)-glucosyl chain covalently attached via a glucose 1-O-tyrosyl linkage to internal tyrosine residues and these chains act as primers for the elongation reaction catalyzed by glycogen synthase. This Cryptococcus neoformans var. grubii serotype A (strain H99 / ATCC 208821 / CBS 10515 / FGSC 9487) (Filobasidiella neoformans var. grubii) protein is Glycogenin.